The sequence spans 53 residues: Toxin CjTL7 (53 aa).

Residues 1-22 (MMIKVLLLLSSALVLFTPEAEG) form the signal peptide. At Trp-51 the chain carries Tryptophan amide.

Post-translationally, contains 4 disulfide bonds.

The protein resides in the secreted. It localises to the nematocyst. In terms of biological role, in vivo, only causes a weak change in behavior in shrimps (C.multidentata) (slight twitching of the walking legs), but no lethal effect is observed. No activity is observed when injected into fly larvae (M.domestica). The protein is Toxin CjTL7 of Epiactis japonica (Sea anemone).